Here is an 89-residue protein sequence, read N- to C-terminus: Small ribosomal subunit protein uS14 (89 aa).

This sequence belongs to the universal ribosomal protein uS14 family. Part of the 30S ribosomal subunit. Contacts proteins S3 and S10.

Functionally, binds 16S rRNA, required for the assembly of 30S particles and may also be responsible for determining the conformation of the 16S rRNA at the A site. In Latilactobacillus sakei subsp. sakei (strain 23K) (Lactobacillus sakei subsp. sakei), this protein is Small ribosomal subunit protein uS14.